The sequence spans 142 residues: Large ribosomal subunit protein uL13 (142 aa).

This sequence belongs to the universal ribosomal protein uL13 family. As to quaternary structure, part of the 50S ribosomal subunit.

Its function is as follows. This protein is one of the early assembly proteins of the 50S ribosomal subunit, although it is not seen to bind rRNA by itself. It is important during the early stages of 50S assembly. The chain is Large ribosomal subunit protein uL13 from Xanthomonas campestris pv. campestris (strain ATCC 33913 / DSM 3586 / NCPPB 528 / LMG 568 / P 25).